A 164-amino-acid polypeptide reads, in one-letter code: Protein phosphatase 1 regulatory subunit 14C (164 aa).

Over residues Met-1 to Ala-19 the composition is skewed to gly residues. The disordered stretch occupies residues Met-1–Thr-72. Ser-2 is modified (N-acetylserine). Position 25 is a phosphoserine (Ser-25). Arg-27 bears the Omega-N-methylarginine mark. Ser-33 is subject to Phosphoserine. The segment covering Val-50–Gln-62 has biased composition (low complexity). Residue Thr-72 is modified to Phosphothreonine; by ILK1.

Belongs to the PP1 inhibitor family. Has over 600-fold higher inhibitory activity when phosphorylated, creating a molecular switch for regulating the phosphorylation status of PPP1CA substrates and smooth muscle contraction. The main inhibitory site appears to be Thr-72.

The protein localises to the endomembrane system. In terms of biological role, inhibitor of the PP1 regulatory subunit PPP1CA. The chain is Protein phosphatase 1 regulatory subunit 14C (Ppp1r14c) from Rattus norvegicus (Rat).